Reading from the N-terminus, the 427-residue chain is MESLTLQPIARVDGTINLPGSKSVSNRALLLAALAHGKTVLTNLLDSDDVRHMLNALTALGVSYTLSADRTRCEIIGNGGPLHAEGALELFLGNAGTAMRPLAAALCLGSNDIVLTGEPRMKERPIGHLVDALRLGGAKITYLEQENYPPLRLQGGFTGGNVDVDGSVSSQFLTALLMNAPLAPEDTVIRIKGDLVSKPYIDITLNLMKTFGVEIENQHYQQFVVKGGQSYQSPGTYLVEGDASSASYFLAAAAIKGGTVKVTGIGRNSMQGDIRFADVLEKMGATICWGDDYISCTRGELNAIDMDMNHIPDAAMTIATAALFAKGTTTLRNIYNWRVKETDRLFAMATELRKVGAEVEEGHDYIRITPPEKLNFAEIATYNDHRMAMCFSLVALSDTPVTILDPKCTAKTFPDYFEQLARISQAA.

The 3-phosphoshikimate site is built by Lys22, Ser23, and Arg27. Phosphoenolpyruvate is bound at residue Lys22. The phosphoenolpyruvate site is built by Gly96 and Arg124. The 3-phosphoshikimate site is built by Ser169, Ser170, Gln171, Ser197, Asp313, Asn336, and Lys340. Gln171 contributes to the phosphoenolpyruvate binding site. Asp313 serves as the catalytic Proton acceptor. Arg344, Arg386, and Lys411 together coordinate phosphoenolpyruvate.

Belongs to the EPSP synthase family. In terms of assembly, monomer.

The protein resides in the cytoplasm. The catalysed reaction is 3-phosphoshikimate + phosphoenolpyruvate = 5-O-(1-carboxyvinyl)-3-phosphoshikimate + phosphate. It participates in metabolic intermediate biosynthesis; chorismate biosynthesis; chorismate from D-erythrose 4-phosphate and phosphoenolpyruvate: step 6/7. Catalyzes the transfer of the enolpyruvyl moiety of phosphoenolpyruvate (PEP) to the 5-hydroxyl of shikimate-3-phosphate (S3P) to produce enolpyruvyl shikimate-3-phosphate and inorganic phosphate. The sequence is that of 3-phosphoshikimate 1-carboxyvinyltransferase from Shigella sonnei.